We begin with the raw amino-acid sequence, 375 residues long: uncharacterized protein (375 aa).

Positions 1 to 12 (MAGNKKQVKKNT) are enriched in basic residues. Disordered stretches follow at residues 1–76 (MAGN…EKKS) and 119–274 (KNKN…KEIK). The span at 26-39 (DTSNLDTAVQTSAS) shows a compositional bias: polar residues. Over residues 129–141 (TATDGTTTTTNIP) the composition is skewed to low complexity. Basic and acidic residues predominate over residues 175–185 (DETHSHKEEPK). Composition is skewed to low complexity over residues 198-212 (SKQQATQNVSSSSSS) and 225-241 (PTPTTTTQRTTTTKSTP). The segment covering 256-274 (EQPKEKSSPAPVKKEKEIK) has biased composition (basic and acidic residues). 2 consecutive transmembrane segments (helical) span residues 299–319 (VVYKIIYVALIGVLLFSLVPL) and 327–347 (IYSYGVIALVLGLGISLTLFI). The disordered stretch occupies residues 355–375 (ASKEQKSKSGNKKSTTRKVKA). The span at 363–375 (SGNKKSTTRKVKA) shows a compositional bias: basic residues.

Its subcellular location is the membrane. This is an uncharacterized protein from Dictyostelium discoideum (Social amoeba).